We begin with the raw amino-acid sequence, 285 residues long: Flagellar filament core protein flaB2 (285 aa).

Belongs to the bacterial flagellin family. In terms of assembly, the flagellum consists of an outer layer composed of two sheath proteins, flaA1 (44 kDa) and flaA2 (35 kDa) around a core that contains three proteins flaB1 (37 kDa), flaB2 (34 kDa) and flaB3 (32 kDa).

Its subcellular location is the periplasmic flagellum. It is found in the periplasm. Functionally, component of the core of the flagella. The polypeptide is Flagellar filament core protein flaB2 (flaB2) (Brachyspira hyodysenteriae (Treponema hyodysenteriae)).